The following is a 221-amino-acid chain: Protein-L-isoaspartate O-methyltransferase (221 aa).

Ser57 is a catalytic residue.

This sequence belongs to the methyltransferase superfamily. L-isoaspartyl/D-aspartyl protein methyltransferase family.

It localises to the cytoplasm. The enzyme catalyses [protein]-L-isoaspartate + S-adenosyl-L-methionine = [protein]-L-isoaspartate alpha-methyl ester + S-adenosyl-L-homocysteine. Catalyzes the methyl esterification of L-isoaspartyl residues in peptides and proteins that result from spontaneous decomposition of normal L-aspartyl and L-asparaginyl residues. It plays a role in the repair and/or degradation of damaged proteins. The protein is Protein-L-isoaspartate O-methyltransferase of Korarchaeum cryptofilum (strain OPF8).